The chain runs to 84 residues: RNA-binding protein Hfq (84 aa).

The Sm domain occupies D11–I71.

It belongs to the Hfq family. Homohexamer.

Its function is as follows. RNA chaperone that binds small regulatory RNA (sRNAs) and mRNAs to facilitate mRNA translational regulation in response to envelope stress, environmental stress and changes in metabolite concentrations. Also binds with high specificity to tRNAs. The sequence is that of RNA-binding protein Hfq from Paramagnetospirillum magneticum (strain ATCC 700264 / AMB-1) (Magnetospirillum magneticum).